Reading from the N-terminus, the 200-residue chain is BREX protein BrxA (200 aa).

It belongs to the BrxA family.

BREX systems (bacteriophage exclusion) provide immunity against bacteriophage. Part of a type 1 BREX system. This system allows phage adsorption but prevents phage DNA replication, without degradation of the phage DNA. Methylation of bacterial DNA by PglX probably guides self/non-self discrimination. When the brxA-brxB-brxC-pglX and pglZ-brxL operons are transformed into a susceptible B.subtilis strain (BEST7003) they confer resistance to bacteriophages SPbeta, SP16, Zeta, phi3T and SP02 and partial protection to phages SP01 and SP82G (these include lytic and temperate phage). They do not protect against phages phi105, rho10 or rho14. Additionally confers a very slight reduction in efficiency of plasmid transformation. This Bacillus cereus (strain H3081.97) protein is BREX protein BrxA.